Consider the following 272-residue polypeptide: Urease accessory protein UreD (272 aa).

It belongs to the UreD family. UreD, UreF and UreG form a complex that acts as a GTP-hydrolysis-dependent molecular chaperone, activating the urease apoprotein by helping to assemble the nickel containing metallocenter of UreC. The UreE protein probably delivers the nickel.

It is found in the cytoplasm. Its function is as follows. Required for maturation of urease via the functional incorporation of the urease nickel metallocenter. This Opitutus terrae (strain DSM 11246 / JCM 15787 / PB90-1) protein is Urease accessory protein UreD.